A 259-amino-acid chain; its full sequence is Putative carbamate hydrolase RutD (259 aa).

It belongs to the AB hydrolase superfamily. Hydrolase RutD family.

The enzyme catalyses carbamate + 2 H(+) = NH4(+) + CO2. Involved in pyrimidine catabolism. May facilitate the hydrolysis of carbamate, a reaction that can also occur spontaneously. The polypeptide is Putative carbamate hydrolase RutD (Pseudomonas syringae pv. syringae (strain B728a)).